The primary structure comprises 381 residues: tRNA pseudouridine synthase D (381 aa).

Residue Asp-81 is the Nucleophile of the active site. Residues 160–335 (GMPNYFGSQR…TLGSRRFFWV (176 aa)) form the TRUD domain.

The protein belongs to the pseudouridine synthase TruD family.

It carries out the reaction uridine(13) in tRNA = pseudouridine(13) in tRNA. Its function is as follows. Responsible for synthesis of pseudouridine from uracil-13 in transfer RNAs. This is tRNA pseudouridine synthase D from Helicobacter pylori (strain G27).